We begin with the raw amino-acid sequence, 185 residues long: Elongation factor P (185 aa).

It belongs to the elongation factor P family.

The protein localises to the cytoplasm. Its pathway is protein biosynthesis; polypeptide chain elongation. Involved in peptide bond synthesis. Stimulates efficient translation and peptide-bond synthesis on native or reconstituted 70S ribosomes in vitro. Probably functions indirectly by altering the affinity of the ribosome for aminoacyl-tRNA, thus increasing their reactivity as acceptors for peptidyl transferase. The chain is Elongation factor P from Lysinibacillus sphaericus (strain C3-41).